The following is a 357-amino-acid chain: S-adenosyl-L-methionine:benzoic acid/salicylic acid carboxyl methyltransferase 3 (357 aa).

An S-adenosyl-L-homocysteine-binding site is contributed by Tyr-18. Gln-25 is a binding site for benzoate. 6 residues coordinate S-adenosyl-L-homocysteine: Cys-59, Asn-64, Asp-96, Leu-97, Ser-135, and Phe-136. Trp-157 is a binding site for benzoate. Asn-168, Asp-254, Phe-256, and Asn-257 together coordinate Mg(2+). Residue Gln-260 participates in benzoate binding.

It belongs to the methyltransferase superfamily. Type-7 methyltransferase family.

The catalysed reaction is benzoate + S-adenosyl-L-methionine = methyl benzoate + S-adenosyl-L-homocysteine. It functions in the pathway aromatic compound metabolism. In terms of biological role, converts benzoic acid into the volatile ester methyl benzoates. This scent, mostly produced in a rhythmical, diurnal manner, attracts the pollinators. This Petunia hybrida (Petunia) protein is S-adenosyl-L-methionine:benzoic acid/salicylic acid carboxyl methyltransferase 3.